The chain runs to 863 residues: DNA replication licensing factor mcm4 (863 aa).

The tract at residues 1–121 (MSSPTSTPSR…ARQRPDLGSA (121 aa)) is disordered. Composition is skewed to polar residues over residues 54-64 (SPSGDLQSPSG) and 78-99 (SALQSELDLSSPLTYGTPSSRV). The C4-type zinc finger occupies 306-331 (CQVCAFTTRVEIDRGRISEPSVCKHC). Residues 458–667 (IYERLASALA…YDRRLAHHLV (210 aa)) form the MCM domain. Residues Y471, R497, K516, S517, N618, R643, R732, and E735 each contribute to the ATP site. The Arginine finger motif lies at 642–645 (SRFD).

The protein belongs to the MCM family. In terms of assembly, component of the mcm2-7 complex (RLF-M). The complex forms a toroidal hexameric ring with the proposed subunit order mcm2-mcm6-mcm4-mcm7-mcm3-mcm5. The heterodimer of mmcm3/mcm5 interacts with mcm4, mmcm6, mcm7 and weakly with mcm2. Component of the CMG helicase complex, composed of the mcm2-7 complex, the GINS complex and cdc45. In terms of processing, hyperphosphorylated during mitosis in a mechanism requiring cdc2-cyclin B and other kinases. Undergoes dephosphorylation after exiting mitosis, existing in a partially phosphorylated state in the cytosolic interphase mcm complex which associates with the pre-replication complexes (pre-Rcs). Complete dephosphorylation inactivates the mcm complex, preventing its binding to chromatin. Becomes actively phosphorylated during S phase once the mcm complex is assembled on the chromatin. This chromatin-associated phosphorylation occurs during the activation of the pre-Rcs and is independent of cdks. Phosphorylated by the cdc7-dbf4b complex.

The protein resides in the nucleus. It is found in the chromosome. The catalysed reaction is ATP + H2O = ADP + phosphate + H(+). Functionally, acts as a component of the MCM2-7 complex (MCM complex) which is the replicative helicase essential for 'once per cell cycle' DNA replication initiation and elongation in eukaryotic cells. Core component of CDC45-MCM-GINS (CMG) helicase, the molecular machine that unwinds template DNA during replication, and around which the replisome is built. The active ATPase sites in the MCM2-7 ring are formed through the interaction surfaces of two neighboring subunits such that a critical structure of a conserved arginine finger motif is provided in trans relative to the ATP-binding site of the Walker A box of the adjacent subunit. The six ATPase active sites, however, are likely to contribute differentially to the complex helicase activity. This chain is DNA replication licensing factor mcm4, found in Xenopus tropicalis (Western clawed frog).